Here is a 187-residue protein sequence, read N- to C-terminus: MSQSKPDTGNEIETQKQELIAALKACGAVRYGDFTLSSGKKSKYYIDIKKASTDPKTLKIIARQAALRVKEMGVGTVAGVELGGVPLATAVSLETGLPLLIVRKSVKEYGTKSRFVGDLRPEDRLVMLEDVTTSGGSVRDAIKVVRETGACVKYVITVVDREEGAKEKLKEADAELVPLVTASDLLK.

5-phospho-alpha-D-ribose 1-diphosphate contacts are provided by residues Arg103, Lys104, Lys107, and 129-137 (EDVTTSGGS). The orotate site is built by Thr133 and Arg161.

This sequence belongs to the purine/pyrimidine phosphoribosyltransferase family. PyrE subfamily. In terms of assembly, homodimer. Mg(2+) is required as a cofactor.

The catalysed reaction is orotidine 5'-phosphate + diphosphate = orotate + 5-phospho-alpha-D-ribose 1-diphosphate. Its pathway is pyrimidine metabolism; UMP biosynthesis via de novo pathway; UMP from orotate: step 1/2. Functionally, catalyzes the transfer of a ribosyl phosphate group from 5-phosphoribose 1-diphosphate to orotate, leading to the formation of orotidine monophosphate (OMP). In Methanosarcina acetivorans (strain ATCC 35395 / DSM 2834 / JCM 12185 / C2A), this protein is Orotate phosphoribosyltransferase.